The following is a 486-amino-acid chain: Scarecrow-like protein 15 (486 aa).

The segment at 1-28 is disordered; it reads MKIPASSPQDTTNNNNNTNSTDSNHLSM. The segment covering 10–24 has biased composition (low complexity); the sequence is DTTNNNNNTNSTDSN. A GRAS domain is found at 113–485; that stretch reads DSVDNGGFDF…RALVATSAWR (373 aa). Residues 120-179 form a leucine repeat I (LRI) region; the sequence is FDFIEDLIRVVDCVESDELQLAQVVLSRLNQRLRSPAGRPLQRAAFYFKEALGSFLTGSN. The VHIID stretch occupies residues 198-266; sequence IKEYSGISPI…VSGGFLRVTA (69 aa). Residues 232–236 carry the VHIID motif; that stretch reads VHVVD. The tract at residues 278 to 310 is leucine repeat II (LRII); it reads LVKENLTQFAAEMKIRFQIEFVLMKTFEMLSFK. The tract at residues 320–410 is PFYRE; sequence TVVLISPAIF…AFVLRPKISA (91 aa). Positions 413 to 485 are SAW; it reads ETAADRRHTG…RALVATSAWR (73 aa).

This sequence belongs to the GRAS family. Expressed in seedlings, roots, leaves and flowers.

The protein resides in the nucleus. In terms of biological role, probable transcription factor involved in plant development. The protein is Scarecrow-like protein 15 (SCL15) of Arabidopsis thaliana (Mouse-ear cress).